A 161-amino-acid polypeptide reads, in one-letter code: ATP synthase subunit b 1 (161 aa).

The chain crosses the membrane as a helical span at residues 3 to 23 (LDATFYALVGLILFFVLIAYL).

This sequence belongs to the ATPase B chain family. As to quaternary structure, F-type ATPases have 2 components, F(1) - the catalytic core - and F(0) - the membrane proton channel. F(1) has five subunits: alpha(3), beta(3), gamma(1), delta(1), epsilon(1). F(0) has three main subunits: a(1), b(2) and c(10-14). The alpha and beta chains form an alternating ring which encloses part of the gamma chain. F(1) is attached to F(0) by a central stalk formed by the gamma and epsilon chains, while a peripheral stalk is formed by the delta and b chains.

It localises to the cell inner membrane. Its function is as follows. F(1)F(0) ATP synthase produces ATP from ADP in the presence of a proton or sodium gradient. F-type ATPases consist of two structural domains, F(1) containing the extramembraneous catalytic core and F(0) containing the membrane proton channel, linked together by a central stalk and a peripheral stalk. During catalysis, ATP synthesis in the catalytic domain of F(1) is coupled via a rotary mechanism of the central stalk subunits to proton translocation. Functionally, component of the F(0) channel, it forms part of the peripheral stalk, linking F(1) to F(0). This chain is ATP synthase subunit b 1, found in Rhizobium meliloti (strain 1021) (Ensifer meliloti).